The chain runs to 517 residues: Crotonobetaine/carnitine--CoA ligase (517 aa).

Belongs to the ATP-dependent AMP-binding enzyme family.

It catalyses the reaction 4-(trimethylamino)butanoate + ATP + CoA = 4-(trimethylamino)butanoyl-CoA + AMP + diphosphate. The catalysed reaction is crotonobetaine + ATP + CoA = crotonobetainyl-CoA + AMP + diphosphate. The enzyme catalyses (R)-carnitine + ATP + CoA = (R)-carnitinyl-CoA + AMP + diphosphate. It functions in the pathway amine and polyamine metabolism; carnitine metabolism. Functionally, catalyzes the transfer of CoA to carnitine, generating the initial carnitinyl-CoA needed for the CaiB reaction cycle. Also has activity toward crotonobetaine and gamma-butyrobetaine. The polypeptide is Crotonobetaine/carnitine--CoA ligase (Escherichia coli O9:H4 (strain HS)).